Consider the following 441-residue polypeptide: Probable acetylornithine aminotransferase, mitochondrial (441 aa).

An N6-(pyridoxal phosphate)lysine modification is found at lysine 294.

This sequence belongs to the class-III pyridoxal-phosphate-dependent aminotransferase family. Requires pyridoxal 5'-phosphate as cofactor.

It localises to the mitochondrion matrix. The enzyme catalyses N(2)-acetyl-L-ornithine + 2-oxoglutarate = N-acetyl-L-glutamate 5-semialdehyde + L-glutamate. It functions in the pathway amino-acid biosynthesis; L-arginine biosynthesis; N(2)-acetyl-L-ornithine from L-glutamate: step 4/4. This is Probable acetylornithine aminotransferase, mitochondrial (arg1) from Schizosaccharomyces pombe (strain 972 / ATCC 24843) (Fission yeast).